Consider the following 322-residue polypeptide: Phosphoenolpyruvate transferase (322 aa).

Position 58 (aspartate 58) interacts with 7,8-didemethyl-8-hydroxy-5-deazariboflavin.

The protein belongs to the CofD family. As to quaternary structure, homodimer. It depends on Mg(2+) as a cofactor.

It catalyses the reaction enolpyruvoyl-2-diphospho-5'-guanosine + 7,8-didemethyl-8-hydroxy-5-deazariboflavin = dehydro coenzyme F420-0 + GMP + H(+). Its pathway is cofactor biosynthesis; coenzyme F420 biosynthesis. Functionally, catalyzes the transfer of the phosphoenolpyruvate moiety from enoylpyruvoyl-2-diphospho-5'-guanosine (EPPG) to 7,8-didemethyl-8-hydroxy-5-deazariboflavin (FO) with the formation of dehydro coenzyme F420-0 and GMP. The chain is Phosphoenolpyruvate transferase from Thermobifida fusca (strain YX).